A 336-amino-acid polypeptide reads, in one-letter code: Holliday junction branch migration complex subunit RuvB (336 aa).

A large ATPase domain (RuvB-L) region spans residues 4 to 185 (MDERLLSGES…FGVLSRLEYY (182 aa)). Residues Leu-24, Arg-25, Gly-66, Lys-69, Thr-70, Thr-71, 132-134 (EDF), Arg-175, Tyr-185, and Arg-222 each bind ATP. Thr-70 is a Mg(2+) binding site. The small ATPAse domain (RuvB-S) stretch occupies residues 186–256 (TVDQLSAIVE…ITQMALELLQ (71 aa)). The interval 259 to 336 (KLGLDHIDHK…EHFGMEMPKV (78 aa)) is head domain (RuvB-H). Residues Arg-314 and Arg-319 each coordinate DNA.

Belongs to the RuvB family. In terms of assembly, homohexamer. Forms an RuvA(8)-RuvB(12)-Holliday junction (HJ) complex. HJ DNA is sandwiched between 2 RuvA tetramers; dsDNA enters through RuvA and exits via RuvB. An RuvB hexamer assembles on each DNA strand where it exits the tetramer. Each RuvB hexamer is contacted by two RuvA subunits (via domain III) on 2 adjacent RuvB subunits; this complex drives branch migration. In the full resolvosome a probable DNA-RuvA(4)-RuvB(12)-RuvC(2) complex forms which resolves the HJ.

The protein localises to the cytoplasm. It catalyses the reaction ATP + H2O = ADP + phosphate + H(+). Its function is as follows. The RuvA-RuvB-RuvC complex processes Holliday junction (HJ) DNA during genetic recombination and DNA repair, while the RuvA-RuvB complex plays an important role in the rescue of blocked DNA replication forks via replication fork reversal (RFR). RuvA specifically binds to HJ cruciform DNA, conferring on it an open structure. The RuvB hexamer acts as an ATP-dependent pump, pulling dsDNA into and through the RuvAB complex. RuvB forms 2 homohexamers on either side of HJ DNA bound by 1 or 2 RuvA tetramers; 4 subunits per hexamer contact DNA at a time. Coordinated motions by a converter formed by DNA-disengaged RuvB subunits stimulates ATP hydrolysis and nucleotide exchange. Immobilization of the converter enables RuvB to convert the ATP-contained energy into a lever motion, pulling 2 nucleotides of DNA out of the RuvA tetramer per ATP hydrolyzed, thus driving DNA branch migration. The RuvB motors rotate together with the DNA substrate, which together with the progressing nucleotide cycle form the mechanistic basis for DNA recombination by continuous HJ branch migration. Branch migration allows RuvC to scan DNA until it finds its consensus sequence, where it cleaves and resolves cruciform DNA. This Bacillus thuringiensis (strain Al Hakam) protein is Holliday junction branch migration complex subunit RuvB.